Here is a 505-residue protein sequence, read N- to C-terminus: Probable inorganic carbon transporter subunit DabB (505 aa).

13 helical membrane-spanning segments follow: residues 9–29 (SLLT…LLFL), 37–57 (FVRI…LILA), 68–88 (WHLD…GFII), 105–123 (YFTL…WLSG), 162–182 (LFLL…HATG), 204–224 (TGIQ…WPFQ), 231–251 (IVAP…AGGI), 259–279 (LFHG…SVLI), 303–323 (GFML…HLIL), 355–375 (LWVM…WLTA), 382–402 (LISA…LVAF), 410–430 (IAGL…HHLF), and 446–466 (MSAV…GTWV).

Belongs to the inorganic carbon transporter (TC 9.A.2) DabB family. In terms of assembly, forms a complex with DabA.

It is found in the cell membrane. Part of an energy-coupled inorganic carbon pump. The chain is Probable inorganic carbon transporter subunit DabB from Bacillus subtilis (strain 168).